Here is a 225-residue protein sequence, read N- to C-terminus: Small ribosomal subunit protein uS3 (225 aa).

The 70-residue stretch at 18–87 (VDEYLAKQFY…NPQITVTSVE (70 aa)) folds into the KH type-2 domain.

It belongs to the universal ribosomal protein uS3 family. In terms of assembly, part of the 30S ribosomal subunit.

Functionally, binds the lower part of the 30S subunit head. This is Small ribosomal subunit protein uS3 from Sulfurisphaera tokodaii (strain DSM 16993 / JCM 10545 / NBRC 100140 / 7) (Sulfolobus tokodaii).